Here is a 336-residue protein sequence, read N- to C-terminus: F420-dependent glucose-6-phosphate dehydrogenase (336 aa).

Asp39 is a binding site for coenzyme F420-(gamma-Glu)n. Residue His40 is the Proton donor of the active site. Residues Thr76 and 107–108 (TG) contribute to the coenzyme F420-(gamma-Glu)n site. The active-site Proton acceptor is Glu109. Coenzyme F420-(gamma-Glu)n contacts are provided by residues Asn112, 177–178 (GG), and 180–181 (AV). 4 residues coordinate substrate: Thr195, Lys198, Lys259, and Arg283.

Belongs to the F420-dependent glucose-6-phosphate dehydrogenase family. In terms of assembly, homodimer.

It catalyses the reaction oxidized coenzyme F420-(gamma-L-Glu)(n) + D-glucose 6-phosphate + H(+) = 6-phospho-D-glucono-1,5-lactone + reduced coenzyme F420-(gamma-L-Glu)(n). Its function is as follows. Catalyzes the coenzyme F420-dependent oxidation of glucose 6-phosphate (G6P) to 6-phosphogluconolactone. Appears to have a role in resistance to oxidative stress, via its consumption of G6P that serves as a source of reducing power to combat oxidative stress in mycobacteria. This Mycobacterium avium (strain 104) protein is F420-dependent glucose-6-phosphate dehydrogenase.